The sequence spans 302 residues: Deoxyribonuclease-1-like 1 (302 aa).

The signal sequence occupies residues 1 to 18 (MHYPTALLFLILVNGAQA). Active-site residues include glutamate 97 and histidine 148. Residues cysteine 187 and cysteine 224 are joined by a disulfide bond. N-linked (GlcNAc...) asparagine glycosylation is present at asparagine 261.

The protein belongs to the DNase I family.

Its subcellular location is the endoplasmic reticulum. In Chlorocebus aethiops (Green monkey), this protein is Deoxyribonuclease-1-like 1 (DNASE1L1).